Consider the following 200-residue polypeptide: Potassium-transporting ATPase KdpC subunit (200 aa).

Residues 6–26 (PALVLLILLTLITGIAYPLLT) form a helical membrane-spanning segment.

Belongs to the KdpC family. The system is composed of three essential subunits: KdpA, KdpB and KdpC.

The protein resides in the cell inner membrane. Part of the high-affinity ATP-driven potassium transport (or Kdp) system, which catalyzes the hydrolysis of ATP coupled with the electrogenic transport of potassium into the cytoplasm. This subunit acts as a catalytic chaperone that increases the ATP-binding affinity of the ATP-hydrolyzing subunit KdpB by the formation of a transient KdpB/KdpC/ATP ternary complex. The sequence is that of Potassium-transporting ATPase KdpC subunit from Yersinia pseudotuberculosis serotype O:1b (strain IP 31758).